Consider the following 387-residue polypeptide: MKLNKKLLMAALAGAIVVGGGVNTFAADEPGAIKVDKAPEAPSQELKLTKEEAEKALKKEKPIAKERLRRLGITSEFILNQIDKATSREGLESLVQTIKQSYLKDHPIKEEKTEETPKYNNLFDKHELGGLGKDKGPGRFDENGWENNEHGYETRENAEKAAVKALGDKEINKSYTISQGVDGRYYYVLSREEAETPKKPEEKKPEDKRPKMTIDQWLLKNAKEDAIAELKKAGITSDFYFNAINKAKTVEEVNALKNEILKAHAGKEVNPSTPEVTPSVPQNHYHENDYANIGAGEGTKEDGKKENSKEGIKRKTAREEKPGKEEKPAKEDKKENKKKENTDSPNKKKKEKAALPEAGRRKAEILTLAAASLSSVAGAFISLKKRK.

An N-terminal signal peptide occupies residues 1 to 26; sequence MKLNKKLLMAALAGAIVVGGGVNTFA. The segment at 122-155 is disordered; that stretch reads LFDKHELGGLGKDKGPGRFDENGWENNEHGYETR. Positions 213–265 are GA module; sequence TIDQWLLKNAKEDAIAELKKAGITSDFYFNAINKAKTVEEVNALKNEILKAHA. The disordered stretch occupies residues 266-360; sequence GKEVNPSTPE…EKAALPEAGR (95 aa). The span at 270-282 shows a compositional bias: polar residues; sequence NPSTPEVTPSVPQ. The span at 298–360 shows a compositional bias: basic and acidic residues; sequence GTKEDGKKEN…EKAALPEAGR (63 aa). Residues 355-359 carry the LPXTG sorting signal motif; sequence LPEAG. Ala-358 carries the pentaglycyl murein peptidoglycan amidated alanine modification. Positions 359 to 387 are cleaved as a propeptide — removed by sortase; it reads GRRKAEILTLAAASLSSVAGAFISLKKRK.

The protein localises to the secreted. The protein resides in the cell wall. Binds serum albumin. The chain is Peptostreptococcal albumin-binding protein (pab) from Finegoldia magna (Peptostreptococcus magnus).